A 575-amino-acid polypeptide reads, in one-letter code: Glycosyltransferase family 92 protein At1g27200 (575 aa).

Residues 22–44 (FLSQRYLILCFCCFFVLLFFLSS) form a helical membrane-spanning segment. A GT92 domain is found at 293 to 540 (LCVCTMLWNQ…TEAIEPPDWK (248 aa)).

This sequence belongs to the glycosyltransferase 92 family.

The protein localises to the membrane. The chain is Glycosyltransferase family 92 protein At1g27200 from Arabidopsis thaliana (Mouse-ear cress).